The sequence spans 338 residues: Palmitoyltransferase ZDHHC15 (338 aa).

The Cytoplasmic portion of the chain corresponds to 1–20 (MLAGCRVALPRGLRCCQRVL). Residues 21 to 41 (SWVPVVIISLVVLWSYYAYVW) form a helical membrane-spanning segment. Over 42-56 (ELCLVTVTNPAEKAA) the chain is Lumenal. A helical transmembrane segment spans residues 57–77 (YLLIFHTVFLLFIWTYWKAIF). Over 78–172 (TPPKQPTKKF…NNCIGYSNYK (95 aa)) the chain is Cytoplasmic. The region spanning 129 to 179 (RFCDTCQMVKPDRCHHCSVCGMCVLKMDHHCPWVNNCIGYSNYKFFLLFLA) is the DHHC domain. Zn(2+) is bound by residues Cys131, Cys134, His144, Cys145, Cys148, Cys151, and His158. Residue Cys159 is the S-palmitoyl cysteine intermediate of the active site. Cys165 lines the Zn(2+) pocket. The helical transmembrane segment at 173–193 (FFLLFLAYAMLYCLYIGCTVF) threads the bilayer. The Lumenal portion of the chain corresponds to 194 to 210 (QYFILYWTDTLSNGRAK). The chain crosses the membrane as a helical span at residues 211–234 (FHVLFLLFVALMFFISLMFLFGYH). Residues 235–338 (CWLVSLNRTT…TSHITVHIEK (104 aa)) lie on the Cytoplasmic side of the membrane.

The protein belongs to the DHHC palmitoyltransferase family. Autopalmitoylated (in vitro).

Its subcellular location is the golgi apparatus membrane. The protein resides in the postsynaptic density. The catalysed reaction is L-cysteinyl-[protein] + hexadecanoyl-CoA = S-hexadecanoyl-L-cysteinyl-[protein] + CoA. It carries out the reaction L-cysteinyl-[protein] + tetradecanoyl-CoA = S-tetradecanoyl-L-cysteinyl-[protein] + CoA. It catalyses the reaction L-cysteinyl-[protein] + octadecanoyl-CoA = S-octadecanoyl-L-cysteinyl-[protein] + CoA. Palmitoyltransferase that catalyzes the addition of palmitate onto various protein substrates. Has no stringent fatty acid selectivity and in addition to palmitate can also transfer onto target proteins myristate from tetradecanoyl-CoA and stearate from octadecanoyl-CoA. May thereby regulate target proteins association and localization to membranes. In the nervous system, probably catalyzes the palmitoylation of synaptic proteins and is involved in the differentiation of dopaminergic neurons and the development of the diencephalon. In Xenopus laevis (African clawed frog), this protein is Palmitoyltransferase ZDHHC15 (zdhhc15).